A 400-amino-acid polypeptide reads, in one-letter code: 1-deoxy-D-xylulose 5-phosphate reductoisomerase (400 aa).

Positions 10, 11, 12, 13, 36, 38, and 124 each coordinate NADPH. Position 125 (Lys-125) interacts with 1-deoxy-D-xylulose 5-phosphate. NADPH is bound at residue Glu-126. Asp-150 is a Mn(2+) binding site. 1-deoxy-D-xylulose 5-phosphate-binding residues include Ser-151, Glu-152, Ser-186, and His-209. Glu-152 contributes to the Mn(2+) binding site. Position 215 (Gly-215) interacts with NADPH. Residues Ser-222, Asn-227, Lys-228, and Glu-231 each contribute to the 1-deoxy-D-xylulose 5-phosphate site. Glu-231 contacts Mn(2+).

Belongs to the DXR family. Mg(2+) serves as cofactor. It depends on Mn(2+) as a cofactor.

It carries out the reaction 2-C-methyl-D-erythritol 4-phosphate + NADP(+) = 1-deoxy-D-xylulose 5-phosphate + NADPH + H(+). It functions in the pathway isoprenoid biosynthesis; isopentenyl diphosphate biosynthesis via DXP pathway; isopentenyl diphosphate from 1-deoxy-D-xylulose 5-phosphate: step 1/6. Functionally, catalyzes the NADPH-dependent rearrangement and reduction of 1-deoxy-D-xylulose-5-phosphate (DXP) to 2-C-methyl-D-erythritol 4-phosphate (MEP). This Aliivibrio fischeri (strain MJ11) (Vibrio fischeri) protein is 1-deoxy-D-xylulose 5-phosphate reductoisomerase.